The primary structure comprises 274 residues: UPF0758 protein RHECIAT_CH0001935 (274 aa).

Positions 1-57 are disordered; sequence MAKRPAATSSNDELPFATEEPVADERSFFGGRPQNPTAPNARAALPASLSGPEHYHG. The 123-residue stretch at 152-274 folds into the MPN domain; it reads VLSSWSSVIQ…HVSLKGLKLI (123 aa). His223, His225, and Asp236 together coordinate Zn(2+). The JAMM motif motif lies at 223 to 236; sequence HNHPSGDPTPSRAD.

Belongs to the UPF0758 family.

The protein is UPF0758 protein RHECIAT_CH0001935 of Rhizobium etli (strain CIAT 652).